A 182-amino-acid chain; its full sequence is Large ribosomal subunit protein uL6 (182 aa).

The protein belongs to the universal ribosomal protein uL6 family. As to quaternary structure, part of the 50S ribosomal subunit.

In terms of biological role, this protein binds to the 23S rRNA, and is important in its secondary structure. It is located near the subunit interface in the base of the L7/L12 stalk, and near the tRNA binding site of the peptidyltransferase center. This is Large ribosomal subunit protein uL6 from Methanococcus maripaludis (strain C6 / ATCC BAA-1332).